The chain runs to 321 residues: Pectinesterase (321 aa).

Residue Thr1 is modified to N-acetylthreonine. Residue Asn75 is glycosylated (N-linked (GlcNAc...) (complex) asparagine). Substrate contacts are provided by Thr84 and Gln114. The active-site Proton donor is the Asp137. An intrachain disulfide couples Cys151 to Cys171. Asp158 functions as the Nucleophile in the catalytic mechanism. Residues Arg226 and Trp228 each coordinate substrate. N-linked (GlcNAc...) (complex) asparagine glycosylation is found at Asn275, Asn290, and Asn319.

Belongs to the pectinesterase family. The N-glycans attached at Asn-75, Asn-275, Asn-290 and Asn-319 are complex oligosaccharides containing xylose, fucose, hexose and N-acetylglucosamine.

It carries out the reaction [(1-&gt;4)-alpha-D-galacturonosyl methyl ester](n) + n H2O = [(1-&gt;4)-alpha-D-galacturonosyl](n) + n methanol + n H(+). The protein operates within glycan metabolism; pectin degradation; 2-dehydro-3-deoxy-D-gluconate from pectin: step 1/5. With respect to regulation, inhibited by PMEI. The chain is Pectinesterase from Actinidia deliciosa (Kiwi).